The primary structure comprises 119 residues: Large ribosomal subunit protein uL18 (119 aa).

Positions 1–25 are disordered; that stretch reads MITKIDKNKVRKKRHARVRSKISGT. Over residues 9–20 the composition is skewed to basic residues; it reads KVRKKRHARVRS.

Belongs to the universal ribosomal protein uL18 family. Part of the 50S ribosomal subunit; part of the 5S rRNA/L5/L18/L25 subcomplex. Contacts the 5S and 23S rRNAs.

This is one of the proteins that bind and probably mediate the attachment of the 5S RNA into the large ribosomal subunit, where it forms part of the central protuberance. This chain is Large ribosomal subunit protein uL18, found in Listeria innocua serovar 6a (strain ATCC BAA-680 / CLIP 11262).